The sequence spans 227 residues: H-2 class II histocompatibility antigen, A-U alpha chain (227 aa).

The alpha-1 stretch occupies residues 1–82; that stretch reads DHVGSYGIVV…KRSNSTPATN (82 aa). Residues 1 to 189 lie on the Extracellular side of the membrane; it reads DHVGSYGIVV…IPAPMSELTE (189 aa). The tract at residues 83–176 is alpha-2; it reads EAPQATVFPK…GLEEPVLKHW (94 aa). Positions 85–177 constitute an Ig-like C1-type domain; that stretch reads PQATVFPKSP…LEEPVLKHWE (93 aa). A disulfide bond links C105 and C161. The N-linked (GlcNAc...) asparagine glycan is linked to N116. A connecting peptide region spans residues 177–189; the sequence is EPEIPAPMSELTE. A helical membrane pass occupies residues 190-215; it reads TVVCALGLSVGLVGIVVGTIFIIQGL. Topologically, residues 216–227 are cytoplasmic; it reads RSGGTSRHPGPL.

Belongs to the MHC class II family.

It localises to the membrane. This chain is H-2 class II histocompatibility antigen, A-U alpha chain (H2-Aa), found in Mus musculus (Mouse).